Here is a 575-residue protein sequence, read N- to C-terminus: Thrombomodulin (575 aa).

The first 18 residues, 1–18 (MLGVLVLGALALAGLGFP), serve as a signal peptide directing secretion. Residues 19 to 515 (APAEPQPGGS…TPPAVGLVHS (497 aa)) lie on the Extracellular side of the membrane. Residues 31–169 (VEHDCFALYP…VKADGFLCEF (139 aa)) enclose the C-type lectin domain. N-linked (GlcNAc...) asparagine glycans are attached at residues N47, N115, and N116. Cystine bridges form between C137-C158, C245-C256, C252-C265, C267-C280, C288-C296, C292-C308, C310-C323, C329-C340, C336-C349, C351-C362, C369-C378, C374-C388, C390-C404, C408-C413, C417-C425, C427-C439, C445-C455, C451-C464, and C466-C480. EGF-like domains lie at 241-281 (GAWD…RSCT) and 284-324 (ATQS…HRCE). Positions 325-363 (DVDDCILEPSPCPQRCVNTQGGFECHCYPNYDLVDGECV) constitute an EGF-like 3; calcium-binding domain. A (3R)-3-hydroxyasparagine modification is found at N342. 2 EGF-like domains span residues 365 to 405 (PVDP…HRCQ) and 404 to 440 (CQMF…FICT). N382 carries N-linked (GlcNAc...) asparagine glycosylation. Residue N409 is glycosylated (N-linked (GlcNAc...) asparagine). Positions 441–481 (DIDECENGGFCSGVCHNLPGTFECICGPDSALARHIGTDCD) constitute an EGF-like 6; calcium-binding domain. Positions 481 to 515 (DSGKVDGGDSGSGEPPPSPTPGSTLTPPAVGLVHS) are involved in alpha-L/beta-2 and alpha-M/beta-2 integrin binding. The disordered stretch occupies residues 484-506 (KVDGGDSGSGEPPPSPTPGSTLT). Residues S490 and S492 are each glycosylated (O-linked (Xyl...) (chondroitin sulfate) serine). A helical membrane pass occupies residues 516–539 (GLLIGISIASLCLVVALLALLCHL). The Cytoplasmic portion of the chain corresponds to 540–575 (RKKQGAARAKMEYKCAAPSKEVVLQHVRTERTPQRL).

In terms of assembly, interacts with ITGAL, ITGAM and ITGB2. Interacts with thrombin/F2; this interaction switches the specificity of thrombin from a procoagulant to an anticoagulant and antifibrinolytic protease. Interacts with ANGP1 and ANGP2; these interactions significantly inhibit the generation of activated PC and TAFIa/CPB2 by the thrombin/thrombomodulin complex. Interacts with PF4; this interaction enhances generation of activated protein C. Interacts with HMGB1; this interaction inhibits HMGB1 inflammatory activity. In terms of processing, N-glycosylated. The iron and 2-oxoglutarate dependent 3-hydroxylation of aspartate and asparagine is (R) stereospecific within EGF domains. As to expression, endothelial cells are unique in synthesizing thrombomodulin.

The protein localises to the membrane. Its function is as follows. Endothelial cell receptor that plays a critical role in regulating several physiological processes including hemostasis, coagulation, fibrinolysis, inflammation, and angiogenesis. Acts as a cofactor for thrombin activation of protein C/PROC on the surface of vascular endothelial cells leading to initiation of the activated protein C anticoagulant pathway. Also accelerates the activation of the plasma carboxypeptidase B2/CPB2, which catalyzes removal of C-terminal basic amino acids from its substrates including kinins or anaphylatoxins leading to fibrinolysis inhibition. Plays critical protective roles in changing the cleavage specificity of protease-activated receptor 1/PAR1, inhibiting endothelial cell permeability and inflammation. Suppresses inflammation distinctly from its anticoagulant cofactor activity by sequestering HMGB1 thereby preventing it from engaging cellular receptors such as RAGE and contributing to the inflammatory response. The chain is Thrombomodulin (THBD) from Homo sapiens (Human).